A 402-amino-acid chain; its full sequence is 1-deoxy-D-xylulose 5-phosphate reductoisomerase (402 aa).

Residues T10, G11, S12, I13, G36, N38, and N124 each coordinate NADPH. 1-deoxy-D-xylulose 5-phosphate is bound at residue K125. E126 is an NADPH binding site. D150 lines the Mn(2+) pocket. 4 residues coordinate 1-deoxy-D-xylulose 5-phosphate: S151, E152, S186, and H209. Residue E152 coordinates Mn(2+). G215 serves as a coordination point for NADPH. Residues S222, N227, K228, and E231 each coordinate 1-deoxy-D-xylulose 5-phosphate. E231 contributes to the Mn(2+) binding site.

This sequence belongs to the DXR family. Mg(2+) is required as a cofactor. It depends on Mn(2+) as a cofactor.

The enzyme catalyses 2-C-methyl-D-erythritol 4-phosphate + NADP(+) = 1-deoxy-D-xylulose 5-phosphate + NADPH + H(+). It functions in the pathway isoprenoid biosynthesis; isopentenyl diphosphate biosynthesis via DXP pathway; isopentenyl diphosphate from 1-deoxy-D-xylulose 5-phosphate: step 1/6. Its function is as follows. Catalyzes the NADPH-dependent rearrangement and reduction of 1-deoxy-D-xylulose-5-phosphate (DXP) to 2-C-methyl-D-erythritol 4-phosphate (MEP). This chain is 1-deoxy-D-xylulose 5-phosphate reductoisomerase, found in Vibrio cholerae serotype O1 (strain ATCC 39541 / Classical Ogawa 395 / O395).